A 603-amino-acid chain; its full sequence is MAQADFVSPTSIDVSEKKEVEFHKKVDHVENPPLSTESAKLEAEEVAAEKLNSEHLLENEFAPITDPTHRRVSKNPDGAELFQFEDEPSYYYVVATYLTYLVLIIIGHVRDFFGKRFHKDDYKYLKDNDGYAPLYNHFDNFYVRRLQHRINDCFSRPTMGVPGRVIRLMNRYSTDSNSTFKLTGDTSLALNVSSYNYLGFAQSHGPCATKVEEAMQKYGLSTCSSNAICGTYGLHKEVEELTANFVGKPAALVFSQGFSTNATVFSTLMCPGSLIISDELNHTSIRFGARLSGANIRVYKHNDMTDLERVLREVISQGQPRTHRPYSKILVVIEGLYSMEGNFCDLPKVVELKNRYKFYLFIDEAHSIGAIGPRGGGICDYFGISTDHVDILMGTFTKSFGAAGGYISATPNIINKLRVTNPGYVYAESMSPAVLAQIKSSFLEIMDNSPTSAGLERIERLAFNSRYIRLGLKRLGFIIFGNDDSPVVPLLLYNPGKINAFSHEMLKRGIAVVVVGYPACPLLTSRVRFCFSASHNKADMDYFLRACDEVGEKLQLKFSTGAAGEDVGKTNVEKMKKNQGWFKPPRWKIEDVLKHGVHDALTQ.

The chain crosses the membrane as a helical span at residues tyrosine 90–glycine 107. The residue at position 398 (lysine 398) is an N6-(pyridoxal phosphate)lysine.

Belongs to the class-II pyridoxal-phosphate-dependent aminotransferase family. In terms of assembly, lcb1 and lcb2 encode essential subunits of the enzyme and form a heterodimer. The cofactor is pyridoxal 5'-phosphate.

The protein localises to the cytoplasm. It is found in the endoplasmic reticulum. The protein resides in the membrane. The catalysed reaction is L-serine + hexadecanoyl-CoA + H(+) = 3-oxosphinganine + CO2 + CoA. The protein operates within lipid metabolism; sphingolipid metabolism. In terms of biological role, catalytic subunit of serine palmitoyltransferase (SPT), which catalyzes the committed step in the synthesis of sphingolipids, the condensation of serine with palmitoyl CoA to form the long chain base 3-ketosphinganine. This is Serine palmitoyltransferase 2 (lcb2) from Schizosaccharomyces pombe (strain 972 / ATCC 24843) (Fission yeast).